A 342-amino-acid polypeptide reads, in one-letter code: Serine/threonine-protein kinase SAPK1 (342 aa).

Residues 4–260 (YEVMRDIGSG…IPEIKNHPWF (257 aa)) form the Protein kinase domain. ATP-binding positions include 10-18 (IGSGNFGVA) and Lys-33. The Proton acceptor role is filled by Asp-123. Residues 253-342 (EIKNHPWFLK…ENSGDFVCAL (90 aa)) are C-terminal.

This sequence belongs to the protein kinase superfamily. Ser/Thr protein kinase family. Phosphorylated. Expressed in leaf blades, leaf sheaths and roots. Expressed in shoots and roots of young seedlings.

It catalyses the reaction L-seryl-[protein] + ATP = O-phospho-L-seryl-[protein] + ADP + H(+). The enzyme catalyses L-threonyl-[protein] + ATP = O-phospho-L-threonyl-[protein] + ADP + H(+). Activated by phosphorylation in response to hyperosmotic stress within 5 minutes. Functionally, may play a role in signal transduction of hyperosmotic response. This is Serine/threonine-protein kinase SAPK1 (SAPK1) from Oryza sativa subsp. japonica (Rice).